The primary structure comprises 202 residues: Regulator of G-protein signaling 16 (202 aa).

2 S-palmitoyl cysteine lipidation sites follow: Cys-2 and Cys-12. The region spanning 65-181 is the RGS domain; the sequence is SFDLLLSSKN…LKSPAYRDLA (117 aa). Tyr-168 is modified (phosphotyrosine; by EGFR). At Tyr-177 the chain carries Phosphotyrosine.

In terms of assembly, interacts with GNAI1 and GNAQ. Interacts with GNAI2, GNAI3 and GNAO1. Palmitoylated on Cys-2 and/or Cys-12. In terms of processing, phosphorylated. Phosphorylation at Tyr-168 by EGFR enhances GTPase accelerating (GAP) activity toward GNAI1. As to expression, abundantly expressed in retina with lower levels of expression in most other tissues.

Its subcellular location is the membrane. Its function is as follows. Regulates G protein-coupled receptor signaling cascades. Inhibits signal transduction by increasing the GTPase activity of G protein alpha subunits, thereby driving them into their inactive GDP-bound form. Plays an important role in the phototransduction cascade by regulating the lifetime and effective concentration of activated transducin alpha. May regulate extra and intracellular mitogenic signals. This chain is Regulator of G-protein signaling 16 (RGS16), found in Homo sapiens (Human).